We begin with the raw amino-acid sequence, 418 residues long: Translation initiation factor 2 subunit gamma (418 aa).

The tr-type G domain maps to 7–206 (QPEVNIGVVG…GIQKYIPTPQ (200 aa)). The G1 stretch occupies residues 16 to 23 (GHVDHGKT). Mg(2+) contacts are provided by D19, T23, G44, and T46. 19-24 (DHGKTT) provides a ligand contact to GTP. Residues 44–48 (GMTIK) form a G2 region. Residues C59, C62, C74, and C77 each contribute to the Zn(2+) site. Positions 93–96 (DAPG) are G3. Residues 149 to 152 (NKVD) and 184 to 186 (SAL) contribute to the GTP site. Residues 149–152 (NKVD) are G4. Residues 184–186 (SAL) form a G5 region.

The protein belongs to the TRAFAC class translation factor GTPase superfamily. Classic translation factor GTPase family. EIF2G subfamily. As to quaternary structure, heterotrimer composed of an alpha, a beta and a gamma chain. It depends on Mg(2+) as a cofactor.

The catalysed reaction is GTP + H2O = GDP + phosphate + H(+). In terms of biological role, eIF-2 functions in the early steps of protein synthesis by forming a ternary complex with GTP and initiator tRNA. In Sulfurisphaera tokodaii (strain DSM 16993 / JCM 10545 / NBRC 100140 / 7) (Sulfolobus tokodaii), this protein is Translation initiation factor 2 subunit gamma.